A 383-amino-acid chain; its full sequence is Na(+)/H(+) antiporter NhaA (383 aa).

Helical transmembrane passes span Leu10–Pro30, Leu56–Ile76, Ile91–Ser111, Gly121–Gly141, Leu150–Phe170, Ser174–Asn194, Val206–Ala226, Pro254–Ser274, Gly275–Val295, Gly327–Phe347, and Ala355–Leu375.

The protein belongs to the NhaA Na(+)/H(+) (TC 2.A.33) antiporter family.

It is found in the cell inner membrane. The catalysed reaction is Na(+)(in) + 2 H(+)(out) = Na(+)(out) + 2 H(+)(in). In terms of biological role, na(+)/H(+) antiporter that extrudes sodium in exchange for external protons. In Francisella tularensis subsp. novicida (strain U112), this protein is Na(+)/H(+) antiporter NhaA.